Here is a 391-residue protein sequence, read N- to C-terminus: Putative 1-acyl-sn-glycerol-3-phosphate acyltransferase acl-12 (391 aa).

The next 2 membrane-spanning stretches (helical) occupy residues 47 to 67 (FFFM…SLLF) and 84 to 104 (LCAM…ATVT). Residues 124 to 129 (HLGLLD) carry the HXXXXD motif motif.

Belongs to the 1-acyl-sn-glycerol-3-phosphate acyltransferase family.

It localises to the membrane. It catalyses the reaction a 1-acyl-sn-glycero-3-phosphate + an acyl-CoA = a 1,2-diacyl-sn-glycero-3-phosphate + CoA. The protein operates within phospholipid metabolism; CDP-diacylglycerol biosynthesis; CDP-diacylglycerol from sn-glycerol 3-phosphate: step 2/3. Its function is as follows. Converts lysophosphatidic acid (LPA) into phosphatidic acid by incorporating an acyl moiety at the sn-2 position of the glycerol backbone. This chain is Putative 1-acyl-sn-glycerol-3-phosphate acyltransferase acl-12 (acl-12), found in Caenorhabditis elegans.